The following is a 369-amino-acid chain: 2-aminoethylphosphonate--pyruvate transaminase (369 aa).

Lysine 193 is modified (N6-(pyridoxal phosphate)lysine).

Belongs to the class-V pyridoxal-phosphate-dependent aminotransferase family. PhnW subfamily. Homodimer. Requires pyridoxal 5'-phosphate as cofactor.

The catalysed reaction is (2-aminoethyl)phosphonate + pyruvate = phosphonoacetaldehyde + L-alanine. In terms of biological role, involved in phosphonate degradation. The chain is 2-aminoethylphosphonate--pyruvate transaminase from Pseudomonas fluorescens (strain Pf0-1).